A 412-amino-acid chain; its full sequence is Zinc finger protein 821 (412 aa).

The segment at 26–83 (RQAMMKTDFPGDLGSQRQAIQQLRDQDSSSSDSEGDEEETTQDEVSSHTSEEDGGVVK) is disordered. Residues 58-67 (SEGDEEETTQ) show a composition bias toward acidic residues. 2 consecutive C2H2-type zinc fingers follow at residues 116 to 140 (ELCQCPLCQLDCGSREQLIAHVYQH) and 150 to 172 (YMCPVCGRALSSPGSLGRHLLIH). The stretch at 257 to 366 (KWALRRQNEP…EKMDMMLRAQ (110 aa)) forms a coiled coil. Residues 278 to 319 (RTAKKSRRDNETPEEREVRRMRDREAKRLQRMQETDEQRARR) are disordered.

This sequence belongs to the krueppel C2H2-type zinc-finger protein family.

It is found in the nucleus. Functionally, may be involved in transcriptional regulation. In Homo sapiens (Human), this protein is Zinc finger protein 821 (ZNF821).